Consider the following 506-residue polypeptide: BTB/POZ domain and ankyrin repeat-containing protein NPR5 (506 aa).

A BTB domain is found at S23–P131. A C2HC NPR-type zinc finger spans residues R137–A151. 4 residues coordinate Zn(2+): C140, C145, H147, and C150. ANK repeat units lie at residues H278–L306, D307–H337, A342–V371, and D375–L409. Positions K481 to P506 are disordered.

This sequence belongs to the plant 'ANKYRIN-BTB/POZ' family. 'NOOT-BOP-COCH-like' (NBCL) subfamily. Homodimer. Interacts with TGAL5, TGAL7, TGAL8 and TGAL11.

The protein resides in the nucleus. It is found in the cytoplasm. It participates in protein modification; protein ubiquitination. In terms of biological role, may act as a substrate-specific adapter of an E3 ubiquitin-protein ligase complex (CUL3-RBX1-BTB) which mediates the ubiquitination and subsequent proteasomal degradation of target proteins. Transcriptional co-regulator involved in the promotion of leaf and floral meristem fate and determinacy. Required for the abscission of senescent organs, probably by regulating the cell wall disorganization in abscission zones (AZs, e.g. pulvini at the base of leaves). Maybe involved in defense response against pathogens. This is BTB/POZ domain and ankyrin repeat-containing protein NPR5 from Oryza sativa subsp. japonica (Rice).